The chain runs to 336 residues: N6-methyladenosine RNA methyltransferase MTA1 (336 aa).

The disordered stretch occupies residues 61-83 (LISSEPPHLPFKTPEPKAGSGGL).

The protein belongs to the MT-A70-like family.

It carries out the reaction an adenosine in mRNA + S-adenosyl-L-methionine = an N(6)-methyladenosine in mRNA + S-adenosyl-L-homocysteine + H(+). In terms of biological role, N6-methyladenosine RNA methyltransferase that plays a crucial role in fungal phenotypic traits, virulence, and stress tolerance. Mediates the methylation of mRNAs to produce N6-methyladenosine (m6A)-containing mRNAs. M6A is a modification present at internal sites of mRNAs and some non-coding RNAs and plays a role in mRNA stability and processing. Mediates specifically acid phosphatase APHA mRNA stability through a YTHDF1-dependent m6A modification of the A1306, A1341, and A1666 key methylation modification sites. Also mediates the stability of the transcription factor ZAP1 mRNA via modification of residue A1935 localized in the 3'UTR. This is N6-methyladenosine RNA methyltransferase MTA1 from Cryphonectria parasitica (strain ATCC 38755 / EP155).